Reading from the N-terminus, the 742-residue chain is Phosphoribosylformylglycinamidine synthase subunit PurL (742 aa).

Histidine 54 is a catalytic residue. 2 residues coordinate ATP: tyrosine 57 and lysine 96. A Mg(2+)-binding site is contributed by glutamate 98. Substrate is bound by residues 99-102 (SHNH) and arginine 121. Histidine 100 (proton acceptor) is an active-site residue. Residue aspartate 122 coordinates Mg(2+). Residues glycine 225 and glutamine 245 each coordinate substrate. Aspartate 273 contributes to the Mg(2+) binding site. Residue 317-319 (ESQ) participates in substrate binding. Glycine 537 contacts ATP. Asparagine 538 serves as a coordination point for Mg(2+). Serine 540 lines the substrate pocket.

The protein belongs to the FGAMS family. Monomer. Part of the FGAM synthase complex composed of 1 PurL, 1 PurQ and 2 PurS subunits.

It is found in the cytoplasm. The enzyme catalyses N(2)-formyl-N(1)-(5-phospho-beta-D-ribosyl)glycinamide + L-glutamine + ATP + H2O = 2-formamido-N(1)-(5-O-phospho-beta-D-ribosyl)acetamidine + L-glutamate + ADP + phosphate + H(+). It carries out the reaction L-glutamine + H2O = L-glutamate + NH4(+). It participates in purine metabolism; IMP biosynthesis via de novo pathway; 5-amino-1-(5-phospho-D-ribosyl)imidazole from N(2)-formyl-N(1)-(5-phospho-D-ribosyl)glycinamide: step 1/2. Its function is as follows. Part of the phosphoribosylformylglycinamidine synthase complex involved in the purines biosynthetic pathway. Catalyzes the ATP-dependent conversion of formylglycinamide ribonucleotide (FGAR) and glutamine to yield formylglycinamidine ribonucleotide (FGAM) and glutamate. The FGAM synthase complex is composed of three subunits. PurQ produces an ammonia molecule by converting glutamine to glutamate. PurL transfers the ammonia molecule to FGAR to form FGAM in an ATP-dependent manner. PurS interacts with PurQ and PurL and is thought to assist in the transfer of the ammonia molecule from PurQ to PurL. This chain is Phosphoribosylformylglycinamidine synthase subunit PurL, found in Bacillus subtilis (strain 168).